A 569-amino-acid polypeptide reads, in one-letter code: Adenine deaminase (569 aa).

Belongs to the metallo-dependent hydrolases superfamily. Adenine deaminase family. It depends on Mn(2+) as a cofactor.

It catalyses the reaction adenine + H2O + H(+) = hypoxanthine + NH4(+). In Desulfitobacterium hafniense (strain Y51), this protein is Adenine deaminase.